An 89-amino-acid chain; its full sequence is MTEAATSLKRTLVGRVVSNKMDKTVTVLIENRVKHPLYGKYVVRSKKYHAHDEANQYNEGDKVEITESRPLSRTKSWVVSRLLEAARVI.

This sequence belongs to the universal ribosomal protein uS17 family. Part of the 30S ribosomal subunit.

One of the primary rRNA binding proteins, it binds specifically to the 5'-end of 16S ribosomal RNA. This is Small ribosomal subunit protein uS17 from Ralstonia pickettii (strain 12J).